Here is a 185-residue protein sequence, read N- to C-terminus: Ribosome-recycling factor (185 aa).

This sequence belongs to the RRF family.

It is found in the cytoplasm. Responsible for the release of ribosomes from messenger RNA at the termination of protein biosynthesis. May increase the efficiency of translation by recycling ribosomes from one round of translation to another. In Exiguobacterium sibiricum (strain DSM 17290 / CCUG 55495 / CIP 109462 / JCM 13490 / 255-15), this protein is Ribosome-recycling factor.